The chain runs to 112 residues: 2Fe-2S ferredoxin (112 aa).

In terms of domain architecture, 2Fe-2S ferredoxin-type spans 5–107; it reads IKVTFIINDE…GIKVRLPSAT (103 aa). Positions 42, 48, 51, and 88 each coordinate [2Fe-2S] cluster.

It belongs to the adrenodoxin/putidaredoxin family. It depends on [2Fe-2S] cluster as a cofactor.

Its function is as follows. Ferredoxin are iron-sulfur proteins that transfer electrons in a wide variety of metabolic reactions. In Rickettsia prowazekii (strain Madrid E), this protein is 2Fe-2S ferredoxin (fdxB).